A 250-amino-acid chain; its full sequence is 5'-nucleotidase SurE (250 aa).

Positions 8, 9, 39, and 91 each coordinate a divalent metal cation.

This sequence belongs to the SurE nucleotidase family. A divalent metal cation is required as a cofactor.

It localises to the cytoplasm. The catalysed reaction is a ribonucleoside 5'-phosphate + H2O = a ribonucleoside + phosphate. In terms of biological role, nucleotidase that shows phosphatase activity on nucleoside 5'-monophosphates. The sequence is that of 5'-nucleotidase SurE from Shewanella halifaxensis (strain HAW-EB4).